Here is a 194-residue protein sequence, read N- to C-terminus: ATP-dependent Clp protease proteolytic subunit (194 aa).

The active-site Nucleophile is the serine 98. Histidine 123 is an active-site residue.

Belongs to the peptidase S14 family. In terms of assembly, fourteen ClpP subunits assemble into 2 heptameric rings which stack back to back to give a disk-like structure with a central cavity, resembling the structure of eukaryotic proteasomes.

Its subcellular location is the cytoplasm. The enzyme catalyses Hydrolysis of proteins to small peptides in the presence of ATP and magnesium. alpha-casein is the usual test substrate. In the absence of ATP, only oligopeptides shorter than five residues are hydrolyzed (such as succinyl-Leu-Tyr-|-NHMec, and Leu-Tyr-Leu-|-Tyr-Trp, in which cleavage of the -Tyr-|-Leu- and -Tyr-|-Trp bonds also occurs).. In terms of biological role, cleaves peptides in various proteins in a process that requires ATP hydrolysis. Has a chymotrypsin-like activity. Plays a major role in the degradation of misfolded proteins. The chain is ATP-dependent Clp protease proteolytic subunit from Acetivibrio thermocellus (strain ATCC 27405 / DSM 1237 / JCM 9322 / NBRC 103400 / NCIMB 10682 / NRRL B-4536 / VPI 7372) (Clostridium thermocellum).